The chain runs to 431 residues: ATP-dependent protease ATPase subunit HslU (431 aa).

ATP contacts are provided by residues V18, 60–65, D244, E309, and R381; that span reads GVGKTE.

This sequence belongs to the ClpX chaperone family. HslU subfamily. As to quaternary structure, a double ring-shaped homohexamer of HslV is capped on each side by a ring-shaped HslU homohexamer. The assembly of the HslU/HslV complex is dependent on binding of ATP.

Its subcellular location is the cytoplasm. Functionally, ATPase subunit of a proteasome-like degradation complex; this subunit has chaperone activity. The binding of ATP and its subsequent hydrolysis by HslU are essential for unfolding of protein substrates subsequently hydrolyzed by HslV. HslU recognizes the N-terminal part of its protein substrates and unfolds these before they are guided to HslV for hydrolysis. This is ATP-dependent protease ATPase subunit HslU from Caulobacter sp. (strain K31).